We begin with the raw amino-acid sequence, 101 residues long: Small ribosomal subunit protein uS14 (101 aa).

Belongs to the universal ribosomal protein uS14 family. In terms of assembly, part of the 30S ribosomal subunit. Contacts proteins S3 and S10.

In terms of biological role, binds 16S rRNA, required for the assembly of 30S particles and may also be responsible for determining the conformation of the 16S rRNA at the A site. This is Small ribosomal subunit protein uS14 from Hahella chejuensis (strain KCTC 2396).